Here is a 438-residue protein sequence, read N- to C-terminus: Trigger factor (438 aa).

Residues 160–245 form the PPIase FKBP-type domain; that stretch reads DDKVTIDFVG…VKKIQQAELP (86 aa).

This sequence belongs to the FKBP-type PPIase family. Tig subfamily.

Its subcellular location is the cytoplasm. The catalysed reaction is [protein]-peptidylproline (omega=180) = [protein]-peptidylproline (omega=0). Its function is as follows. Involved in protein export. Acts as a chaperone by maintaining the newly synthesized protein in an open conformation. Functions as a peptidyl-prolyl cis-trans isomerase. The polypeptide is Trigger factor (Francisella tularensis subsp. holarctica (strain LVS)).